The chain runs to 122 residues: Large ribosomal subunit protein uL14 (122 aa).

It belongs to the universal ribosomal protein uL14 family. As to quaternary structure, part of the 50S ribosomal subunit. Forms a cluster with proteins L3 and L19. In the 70S ribosome, L14 and L19 interact and together make contacts with the 16S rRNA in bridges B5 and B8.

Functionally, binds to 23S rRNA. Forms part of two intersubunit bridges in the 70S ribosome. This Cutibacterium acnes (strain DSM 16379 / KPA171202) (Propionibacterium acnes) protein is Large ribosomal subunit protein uL14.